Here is a 498-residue protein sequence, read N- to C-terminus: Ammonium transporter 1 member 1 (498 aa).

The next 11 membrane-spanning stretches (helical) occupy residues 39–59 (LLFS…LCAG), 74–94 (VLDA…FAFG), 120–140 (FFLF…GSIA), 148–168 (YLIY…HWIW), 192–212 (FAGS…GALI), 236–256 (LVVL…PGSF), 274–296 (SGVG…TTLF), 307–327 (VVDV…GCSV), 331–351 (WAAI…NALA), 360–380 (LEAA…TALF), and 411–431 (VIQI…LFYG).

The protein belongs to the ammonia transporter channel (TC 1.A.11.2) family. Expressed in roots and shoots.

Its subcellular location is the membrane. Ammonium transporter probably involved in ammonium uptake from the soil. In Oryza sativa subsp. japonica (Rice), this protein is Ammonium transporter 1 member 1 (AMT1-1).